A 365-amino-acid chain; its full sequence is tRNA-specific 2-thiouridylase MnmA (365 aa).

ATP contacts are provided by residues alanine 6–serine 13 and methionine 32. Catalysis depends on cysteine 101, which acts as the Nucleophile. Cysteines 101 and 199 form a disulfide. Residue glycine 125 coordinates ATP. The segment at lysine 148–glutamine 150 is interaction with tRNA. The Cysteine persulfide intermediate role is filled by cysteine 199.

It belongs to the MnmA/TRMU family.

The protein resides in the cytoplasm. It carries out the reaction S-sulfanyl-L-cysteinyl-[protein] + uridine(34) in tRNA + AH2 + ATP = 2-thiouridine(34) in tRNA + L-cysteinyl-[protein] + A + AMP + diphosphate + H(+). Its function is as follows. Catalyzes the 2-thiolation of uridine at the wobble position (U34) of tRNA, leading to the formation of s(2)U34. The sequence is that of tRNA-specific 2-thiouridylase MnmA from Kineococcus radiotolerans (strain ATCC BAA-149 / DSM 14245 / SRS30216).